The following is a 358-amino-acid chain: Protein FAM50 homolog (358 aa).

Residues 104-113 (AKLAEKDRQK) show a composition bias toward basic and acidic residues. Residues 104–151 (AKLAEKDRQKRQIQALSFDPDDEPDGDDANDGDEGSGKESEKEDVKEE) are disordered. Positions 122–137 (DPDDEPDGDDANDGDE) are enriched in acidic residues. The segment covering 138 to 151 (GSGKESEKEDVKEE) has biased composition (basic and acidic residues).

This sequence belongs to the FAM50 family.

This is Protein FAM50 homolog from Anopheles gambiae (African malaria mosquito).